A 32-amino-acid polypeptide reads, in one-letter code: Beta-hexosaminidase (32 aa).

In terms of domain architecture, GH18 spans 1–32 (GKSSSRPLGDATLGDLDFDIEVTQDYWDDLAR). The active-site Proton donor is Glu21.

It belongs to the glycosyl hydrolase 18 family. Chitinase class II subfamily.

It catalyses the reaction Hydrolysis of terminal non-reducing N-acetyl-D-hexosamine residues in N-acetyl-beta-D-hexosaminides.. Activity is decreased by HgCl(2) and maltose. Activity is stimulated by Na(2)SeO(4), BaCl(2), MgCl(2), chondroitin 6-sulfate and phenylmethylsulfonyl fluoride. Functionally, preferentially hydrolyzes pNP-GlcNAc, hydrolyzes pNP-GalNAc to a lesser extent. This is Beta-hexosaminidase from Palythoa caribaeorum (White encrusting zoanthid coral).